Reading from the N-terminus, the 1108-residue chain is Eukaryotic translation initiation factor 2-alpha kinase 3 (1108 aa).

The signal sequence occupies residues 1–27 (MERATQPRPRALLLLFLLLGCAAGISA). Residues 28–506 (VARARSLLAP…HYSKNIRKKD (479 aa)) are Lumenal-facing. Residues 71–92 (EALPAASGEQESRATESDDDVE) form a disordered region. Asn-253 is a glycosylation site (N-linked (GlcNAc...) asparagine). A helical transmembrane segment spans residues 507 to 527 (PILLLHWWKEIFGTILLCIVA). Topologically, residues 528-1108 (TTFIVRRLFH…SSTFSPLPGN (581 aa)) are cytoplasmic. The interval 542 to 563 (RQRKESETQCQTESKYDSVSAD) is disordered. In terms of domain architecture, Protein kinase spans 585–1069 (FEPIQCMGRG…ATDIIENAVF (485 aa)). 591 to 599 (MGRGGFGVV) lines the ATP pocket. The residue at position 611 (Tyr-611) is a Phosphotyrosine; by autocatalysis. Lys-614 is a binding site for ATP. Positions 639-880 (EHPGIVRYFN…SPKVYLYIQM (242 aa)) are insert loop. A Phosphoserine modification is found at Ser-707. 2 disordered regions span residues 772–818 (DEGH…RMNR) and 832–856 (FKHS…TTLS). Residues 785–798 (SPYTRSREGTSSSI) show a composition bias toward polar residues. At Thr-794 the chain carries Phosphothreonine. Low complexity predominate over residues 837 to 856 (SRSSSEATLSTSPTRPTTLS). The active-site Proton acceptor is the Asp-929. Thr-974 bears the Phosphothreonine mark. The interval 1080–1108 (LRQRSRSLSSSGTKHSRQPSSTFSPLPGN) is disordered. The residue at position 1086 (Ser-1086) is a Phosphoserine. Positions 1097–1108 (QPSSTFSPLPGN) are enriched in polar residues.

The protein belongs to the protein kinase superfamily. Ser/Thr protein kinase family. GCN2 subfamily. As to quaternary structure, forms dimers with HSPA5/BIP in resting cells. Homotetramerizes in response to endoplasmic reticulum (ER) stress, leading to its activation. Interacts with HSP90B1/GRP94. Interacts with DNAJC3; inhibiting EIF2AK3/PERK activity. Interacts with ATAD3A; ATAD3A and EIF2S1/eIF-2-alpha occupy a common binding site within the cytoplasmic loop of EIF2AK3/PERK, leading to prevent EIF2AK3/PERK association with its substrate EIF2S1/eIF-2-alpha. Interacts with MFN2. Interacts with TMEM33. Interacts with PDIA6. Interacts with LACC1. Post-translationally, oligomerization of the N-terminal ER luminal domain by ER stress promotes EIF2AK3/PERK trans-autophosphorylation of the C-terminal cytoplasmic kinase domain at multiple residues including Thr-974 on the kinase activation loop. Autophosphorylated at Tyr-611 following endoplasmic reticulum stress, leading to activate its activity. Dephosphorylated at Tyr-611 by PTPN1/PTP1B, leading to inactivate its enzyme activity. Phosphorylation at Thr-794 by AKT (AKT1, AKT2 and/or AKT3) inactivates EIF2AK3/PERK. ADP-ribosylated by PARP16 upon ER stress, which increases kinase activity. As to expression, ubiquitous.

Its subcellular location is the endoplasmic reticulum membrane. The catalysed reaction is L-seryl-[protein] + ATP = O-phospho-L-seryl-[protein] + ADP + H(+). It carries out the reaction L-threonyl-[protein] + ATP = O-phospho-L-threonyl-[protein] + ADP + H(+). The enzyme catalyses L-tyrosyl-[protein] + ATP = O-phospho-L-tyrosyl-[protein] + ADP + H(+). Inhibited by HSPA5/BIP in absence of stress. Perturbation in protein folding in the endoplasmic reticulum (ER) promotes reversible dissociation from HSPA5/BIP and oligomerization, resulting in trans-autophosphorylation and kinase activity induction. Inactivated following phosphorylation at Thr-794 by AKT (AKT1, AKT2 and/or AKT3). Inhibited by ATAD3A at mitochondria-endoplasmic reticulum contact sites, providing a safe haven for mitochondrial protein translation during ER stress. Functionally, metabolic-stress sensing protein kinase that phosphorylates the alpha subunit of eukaryotic translation initiation factor 2 (EIF2S1/eIF-2-alpha) in response to various stress, such as unfolded protein response (UPR). Key effector of the integrated stress response (ISR) to unfolded proteins: EIF2AK3/PERK specifically recognizes and binds misfolded proteins, leading to its activation and EIF2S1/eIF-2-alpha phosphorylation. EIF2S1/eIF-2-alpha phosphorylation in response to stress converts EIF2S1/eIF-2-alpha in a global protein synthesis inhibitor, leading to a global attenuation of cap-dependent translation, while concomitantly initiating the preferential translation of ISR-specific mRNAs, such as the transcriptional activators ATF4 and QRICH1, and hence allowing ATF4- and QRICH1-mediated reprogramming. The EIF2AK3/PERK-mediated unfolded protein response increases mitochondrial oxidative phosphorylation by promoting ATF4-mediated expression of COX7A2L/SCAF1, thereby increasing formation of respiratory chain supercomplexes. In contrast to most subcellular compartments, mitochondria are protected from the EIF2AK3/PERK-mediated unfolded protein response due to EIF2AK3/PERK inhibition by ATAD3A at mitochondria-endoplasmic reticulum contact sites. In addition to EIF2S1/eIF-2-alpha, also phosphorylates NFE2L2/NRF2 in response to stress, promoting release of NFE2L2/NRF2 from the BCR(KEAP1) complex, leading to nuclear accumulation and activation of NFE2L2/NRF2. Serves as a critical effector of unfolded protein response (UPR)-induced G1 growth arrest due to the loss of cyclin-D1 (CCND1). Involved in control of mitochondrial morphology and function. This chain is Eukaryotic translation initiation factor 2-alpha kinase 3 (Eif2ak3), found in Rattus norvegicus (Rat).